A 248-amino-acid chain; its full sequence is Murein peptide amidase A (248 aa).

A Peptidase M14 domain is found at 3 to 245 (RYYSNNQEIT…DAFIALLQHD (243 aa)). Residues histidine 60, glutamate 63, and histidine 168 each coordinate Zn(2+). The Proton donor/acceptor role is filled by glutamate 221.

The protein belongs to the peptidase M14 family. As to quaternary structure, homodimer. The cofactor is Zn(2+).

Its subcellular location is the cytoplasm. The enzyme catalyses L-alanyl-gamma-D-glutamyl-meso-2,6-diaminopimelate + H2O = L-alanyl-D-glutamate + meso-2,6-diaminopimelate. The protein operates within cell wall degradation; peptidoglycan degradation. In terms of biological role, involved in muropeptide degradation. Catalyzes the hydrolysis of the gamma-D-glutamyl-diaminopimelic acid (gamma-D-Glu-Dap) amide bond in the murein tripeptide L-alanyl-gamma-D-glutamyl-meso-diaminopimelic acid, leading to the formation of L-Ala-gamma-D-Glu and Dap. Has weak activity with L-Ala-gamma-D-Glu-L-Lys, MurNAc-tripeptide and gamma-D-Glu-meso-Dap. Cannot hydrolyze murein tetrapeptide. This chain is Murein peptide amidase A, found in Vibrio campbellii (strain ATCC BAA-1116).